Here is a 161-residue protein sequence, read N- to C-terminus: 2-C-methyl-D-erythritol 2,4-cyclodiphosphate synthase (161 aa).

A divalent metal cation contacts are provided by Asp-11 and His-13. 4-CDP-2-C-methyl-D-erythritol 2-phosphate is bound by residues 11-13 (DIH) and 37-38 (HS). Residue His-45 coordinates a divalent metal cation. 4-CDP-2-C-methyl-D-erythritol 2-phosphate is bound by residues 59–61 (DIG), 135–138 (TTNE), and Arg-145.

Belongs to the IspF family. In terms of assembly, homotrimer. It depends on a divalent metal cation as a cofactor.

It catalyses the reaction 4-CDP-2-C-methyl-D-erythritol 2-phosphate = 2-C-methyl-D-erythritol 2,4-cyclic diphosphate + CMP. Its pathway is isoprenoid biosynthesis; isopentenyl diphosphate biosynthesis via DXP pathway; isopentenyl diphosphate from 1-deoxy-D-xylulose 5-phosphate: step 4/6. Its function is as follows. Involved in the biosynthesis of isopentenyl diphosphate (IPP) and dimethylallyl diphosphate (DMAPP), two major building blocks of isoprenoid compounds. Catalyzes the conversion of 4-diphosphocytidyl-2-C-methyl-D-erythritol 2-phosphate (CDP-ME2P) to 2-C-methyl-D-erythritol 2,4-cyclodiphosphate (ME-CPP) with a corresponding release of cytidine 5-monophosphate (CMP). The protein is 2-C-methyl-D-erythritol 2,4-cyclodiphosphate synthase of Cyanothece sp. (strain PCC 7425 / ATCC 29141).